The primary structure comprises 281 residues: MKYTIIPFLLLVALTCATARSIDGSEKEVQEIREETPSSNEDVPFSLSANEDEEARGRLQAFLAKMKEIAAQTLGREESLSANEDEEARGRMQEFIKKLKAYLRKMKEKFSQISGREESFSANEDEEERGRLQAFLAKMKAIAAQTLGREESISANEDEETRGRLQAFLAKMKEIAAQTLGREESLSAIEDEEARGRLQAFLAKMKEIAAQTLGREESLSANEDEEARGRLQAFLAKTKEIAAQTLGREESLSANEDEEARGRLQAFLAKMKEIAAQTLGR.

Residues 1–19 (MKYTIIPFLLLVALTCATA) form the signal peptide. Positions 20 to 56 (RSIDGSEKEVQEIREETPSSNEDVPFSLSANEDEEAR) are excised as a propeptide. L74 bears the Leucine amide mark. The propeptide occupies 75-89 (GREESLSANEDEEAR). Residue S114 is modified to Serine amide. The propeptide occupies 115–129 (GREESFSANEDEEER). L147 carries the post-translational modification Leucine amide. A propeptide spanning residues 148 to 162 (GREESISANEDEETR) is cleaved from the precursor. L180 carries the leucine amide modification. A propeptide spanning residues 181–195 (GREESLSAIEDEEAR) is cleaved from the precursor. The residue at position 213 (L213) is a Leucine amide. The propeptide occupies 214–228 (GREESLSANEDEEAR). L246 carries the leucine amide modification. A propeptide spanning residues 247–261 (GREESLSANEDEEAR) is cleaved from the precursor. Position 279 is a leucine amide (L279).

Expressed by the venom gland.

Its subcellular location is the secreted. Functionally, antimicrobial peptide that acts by influencing bacterial cell membrane permeability at low concentrations and by directly disrupting structure-function at high concentrations. Shows activity against Gram-negative bacteria (S.typhimurium CGMCC 1.1174 (MIC=2.5 uM), E.coli CCTCC AB 2018675 (MIC=5 uM), S.dysenteriae CGMCC 1.1869 (MIC=2.5 uM), P.aeruginosa CGMCC 1.596 (MIC 5-10 uM), K.pneumoniae (MIC=10 uM), A.baumannii (MIC=5-10 uM)), and Gram-positive bacteria (S.aureus CMCC 26003 or MRSA ATCC 43300 (MIC=5 uM), and E.faecium (MIC=2.5-5 uM)). Inhibits biofilm formation of E.coli and S.aureus in a dose-dependent manner and disrupts established biofilms. Demonstrates minimal bacterial resistance, excellent stability, negligible mammalian cell toxicity, low hemolytic activity, and appropriate selectivity for both normal and tumor cells. When combined with traditional antibiotics, exhibits additive or synergistic therapeutic effects. In vivo, in a neutropenic mouse thigh infection model, exhibits a therapeutic effect in inhibiting bacterial proliferation. In Lycosa coelestis (Wolf spider), this protein is LC-AMP precursor 3.